The primary structure comprises 271 residues: Autophagy-related protein 5 (271 aa).

Lys145 is covalently cross-linked (Glycyl lysine isopeptide (Lys-Gly) (interchain with G-Cter in ATG12)).

It belongs to the ATG5 family. As to quaternary structure, conjugated with ATG12. Interacts with ATG10. The ATG5-ATG12 conjugate forms a complex with several units of ATG16. The ATG12-ATG5 conjugate also associates with ATG3. Post-translationally, conjugated to ATG12; which is essential for autophagy. Conjugation with ATG12 involves ATG7 as an E1-like activating enzyme and ATG10 as an E2-like conjugating enzyme.

Its subcellular location is the preautophagosomal structure membrane. In terms of biological role, involved in cytoplasm to vacuole transport (Cvt) and autophagic vesicle formation. Autophagy is essential for maintenance of amino acid levels and protein synthesis under nitrogen starvation. Required for selective autophagic degradation of the nucleus (nucleophagy). Also required for mitophagy, which eliminates defective or superfluous mitochondria in order to fulfill cellular energy requirements and prevent excess ROS production. Conjugation with ATG12, through a ubiquitin-like conjugating system involving ATG7 as an E1-like activating enzyme and ATG10 as an E2-like conjugating enzyme, is essential for its function. The ATG12-ATG5 conjugate acts as an E3-like enzyme which is required for lipidation of ATG8 and ATG8 association to the vesicle membranes. ATG12-ATG5 rearranges the ATG3 catalytic center and enhances its E2 activity. This is Autophagy-related protein 5 from Kluyveromyces marxianus (strain DMKU3-1042 / BCC 29191 / NBRC 104275) (Yeast).